Reading from the N-terminus, the 382-residue chain is Sulfate adenylyltransferase (382 aa).

It belongs to the sulfate adenylyltransferase family.

It carries out the reaction sulfate + ATP + H(+) = adenosine 5'-phosphosulfate + diphosphate. It functions in the pathway sulfur metabolism; hydrogen sulfide biosynthesis; sulfite from sulfate: step 1/3. The protein is Sulfate adenylyltransferase of Ignicoccus hospitalis (strain KIN4/I / DSM 18386 / JCM 14125).